We begin with the raw amino-acid sequence, 429 residues long: 3-oxo-tetronate kinase (429 aa).

Residues Ser268, 366–369 (GGET), and Gly410 each bind ATP.

Belongs to the four-carbon acid sugar kinase family.

The enzyme catalyses 3-dehydro-L-erythronate + ATP = 3-dehydro-4-O-phospho-L-erythronate + ADP + H(+). It carries out the reaction 3-dehydro-D-erythronate + ATP = 3-dehydro-4-O-phospho-D-erythronate + ADP + H(+). Its function is as follows. Catalyzes the ATP-dependent phosphorylation of 3-oxo-tetronate to 3-oxo-tetronate 4-phosphate. The sequence is that of 3-oxo-tetronate kinase from Pseudomonas savastanoi pv. phaseolicola (strain 1448A / Race 6) (Pseudomonas syringae pv. phaseolicola (strain 1448A / Race 6)).